The chain runs to 67 residues: Large ribosomal subunit protein uL29 (67 aa).

It belongs to the universal ribosomal protein uL29 family.

This is Large ribosomal subunit protein uL29 from Methanosarcina mazei (strain ATCC BAA-159 / DSM 3647 / Goe1 / Go1 / JCM 11833 / OCM 88) (Methanosarcina frisia).